The primary structure comprises 522 residues: Probable G-protein coupled receptor egl-47 (522 aa).

The next 7 helical transmembrane spans lie at 140–160 (IIKLILYVNYIVLAVLLNSFL), 184–204 (ASMITATKPVINVFVIVLSAI), 238–258 (FVFFFTLLIIFFSALILKVVE), 276–296 (FILVPVLSLWNIIPLLYYHLY), 345–365 (PLLLFSLAWSLLVLCLTLYFL), 398–418 (ICWAAYQVVMAILHIIIICST), and 472–492 (LERTTFFTLISVIVTYSLLLF).

The protein belongs to the G-protein coupled receptor family. As to expression, expressed in some neurons in the head, the HSN neurons and the PVQ interneurons of the tail.

Its subcellular location is the membrane. Orphan receptor. Regulates egg-laying probably by activating guanine nucleotide-binding protein goa-1, in the hermaphrodite-specific neurons (HSNs). This is Probable G-protein coupled receptor egl-47 from Caenorhabditis elegans.